Consider the following 364-residue polypeptide: Fructose-1,6-bisphosphatase class 1 1 (364 aa).

Mg(2+) is bound by residues glutamate 99, aspartate 121, leucine 123, and aspartate 124. Residues 124 to 127 and asparagine 220 contribute to the substrate site; that span reads DGSS. Residue glutamate 292 coordinates Mg(2+).

The protein belongs to the FBPase class 1 family. Homotetramer. It depends on Mg(2+) as a cofactor.

The protein localises to the cytoplasm. The catalysed reaction is beta-D-fructose 1,6-bisphosphate + H2O = beta-D-fructose 6-phosphate + phosphate. It functions in the pathway carbohydrate biosynthesis; gluconeogenesis. This Albidiferax ferrireducens (strain ATCC BAA-621 / DSM 15236 / T118) (Rhodoferax ferrireducens) protein is Fructose-1,6-bisphosphatase class 1 1.